The sequence spans 255 residues: Triosephosphate isomerase (255 aa).

Residue N9–K11 participates in substrate binding. The active-site Electrophile is the H95. The active-site Proton acceptor is E167. Substrate-binding positions include G173, S212, and G233–G234.

Belongs to the triosephosphate isomerase family. Homodimer.

It localises to the cytoplasm. The catalysed reaction is D-glyceraldehyde 3-phosphate = dihydroxyacetone phosphate. It functions in the pathway carbohydrate biosynthesis; gluconeogenesis. It participates in carbohydrate degradation; glycolysis; D-glyceraldehyde 3-phosphate from glycerone phosphate: step 1/1. Functionally, involved in the gluconeogenesis. Catalyzes stereospecifically the conversion of dihydroxyacetone phosphate (DHAP) to D-glyceraldehyde-3-phosphate (G3P). The chain is Triosephosphate isomerase from Escherichia fergusonii (strain ATCC 35469 / DSM 13698 / CCUG 18766 / IAM 14443 / JCM 21226 / LMG 7866 / NBRC 102419 / NCTC 12128 / CDC 0568-73).